Consider the following 415-residue polypeptide: Phosphoglycerate kinase (415 aa).

The (2R)-3-phosphoglycerate site is built by Val-22, Asp-23, Phe-24, Asn-25, Gln-37, Arg-38, Ser-61, His-62, Gly-64, Leu-120, Arg-121, His-168, and Arg-169. ADP is bound at residue Gly-212. CDP is bound at residue Gly-212. AMP is bound by residues Ala-213 and Lys-214. Ala-213 provides a ligand contact to ATP. Position 213 (Ala-213) interacts with Mg(2+). Residue Asp-217 coordinates CDP. Asp-217 lines the Mg(2+) pocket. An AMP-binding site is contributed by Lys-218. Lys-218 is a binding site for ATP. Residue Gly-236 coordinates ADP. Residue Gly-236 coordinates CDP. Residues Gly-237 and Gly-311 each contribute to the AMP site. 2 residues coordinate ATP: Gly-237 and Gly-311. CDP is bound by residues Gly-336 and Phe-341. An ADP-binding site is contributed by Phe-341. Position 342 (Glu-342) interacts with AMP. Positions 342, 373, and 374 each coordinate ATP. Asp-373 provides a ligand contact to Mg(2+).

This sequence belongs to the phosphoglycerate kinase family. As to quaternary structure, monomer. Requires Mg(2+) as cofactor.

It localises to the cytoplasm. The catalysed reaction is (2R)-3-phosphoglycerate + ATP = (2R)-3-phospho-glyceroyl phosphate + ADP. Its pathway is carbohydrate degradation; glycolysis; pyruvate from D-glyceraldehyde 3-phosphate: step 2/5. This is Phosphoglycerate kinase (PGK) from Opisthorchis sinensis (Clonorchis sinensis).